Consider the following 300-residue polypeptide: B1 kinase (300 aa).

Positions 16 to 282 constitute a Protein kinase domain; the sequence is WVVGPLIGKG…ITMVNSLTYF (267 aa). ATP-binding positions include 22-30 and K45; that span reads IGKGGFGSI. D147 (proton acceptor) is an active-site residue.

The protein belongs to the protein kinase superfamily. Ser/Thr protein kinase family. Poxviruses subfamily. As to quaternary structure, interacts with host JIP1; this interaction increases the amount of MAPK bound to JIP1 and subsequently increases the activity of transcription factors, such as JUN, that respond to these complexes. Interacts with protein OPG198; this interaction inhibits the repressive activity of OPG198 pseudokinase on viral replication factory formation. Mg(2+) serves as cofactor. In terms of processing, autophosphorylated.

It localises to the virion. The protein localises to the host cytoplasm. The catalysed reaction is L-seryl-[protein] + ATP = O-phospho-L-seryl-[protein] + ADP + H(+). It carries out the reaction L-threonyl-[protein] + ATP = O-phospho-L-threonyl-[protein] + ADP + H(+). Functionally, essential serine/threonine-protein kinase that plays different role in the viral life cycle. Phosphorylates the host small ribosomal protein RACK1 thereby customizing the ribosomes to a state optimal for viral mRNAs (which contain poly-A leaders) but not for host mRNAs. Facilitates viral DNA replication by inhibiting host BANF1, a cellular host defense responsive to foreign DNA. Phosphorylates host BANF1 on serine and threonine residues; this leads to BANF1 relocalization to the cytoplasm, loss of dimerization and impaired DNA binding activity. Indeed, BANF1 activity depends on its DNA-binding property which is blocked by VPK1-mediated phosphorylation. Required for viral intermediate genes expression, probably by inhibiting host BANF1. Modulates cellular responses via host JUN by two different mechanisms, either by direct phosphorylation or by modulation of upstream JIP1-MAPK complexes. Seems to participate in the accumulation/processing of late proteins and thus in virion maturation. In addition, inhibits B12 repressive activity on viral DNA replication via a phosphorylation-dependent mechanism. The chain is B1 kinase (OPG187) from Vaccinia virus (strain Ankara) (VACV).